The chain runs to 278 residues: Large ribosomal subunit protein uL2c (278 aa).

The interval 222 to 241 is disordered; that stretch reads GVVMNPNDHPHGGGEGRSPI.

The protein belongs to the universal ribosomal protein uL2 family. Part of the 50S ribosomal subunit.

The protein localises to the plastid. It localises to the chloroplast. The protein is Large ribosomal subunit protein uL2c (rpl2) of Tupiella akineta (Green alga).